The chain runs to 88 residues: Phosphocarrier protein HPr (88 aa).

An HPr domain is found at 1–88 (MEKREFNIIA…DTMKKEGLAE (88 aa)). The active-site Pros-phosphohistidine intermediate is histidine 15. Position 46 is a phosphoserine; by HPrK/P (serine 46).

Belongs to the HPr family.

It is found in the cytoplasm. With respect to regulation, phosphorylation on Ser-46 inhibits the phosphoryl transfer from enzyme I to HPr. Its function is as follows. General (non sugar-specific) component of the phosphoenolpyruvate-dependent sugar phosphotransferase system (sugar PTS). This major carbohydrate active-transport system catalyzes the phosphorylation of incoming sugar substrates concomitantly with their translocation across the cell membrane. The phosphoryl group from phosphoenolpyruvate (PEP) is transferred to the phosphoryl carrier protein HPr by enzyme I. Phospho-HPr then transfers it to the PTS EIIA domain. P-Ser-HPr interacts with the catabolite control protein A (CcpA), forming a complex that binds to DNA at the catabolite response elements cre, operator sites preceding a large number of catabolite-regulated genes. Thus, P-Ser-HPr is a corepressor in carbon catabolite repression (CCR), a mechanism that allows bacteria to coordinate and optimize the utilization of available carbon sources. P-Ser-HPr also plays a role in inducer exclusion, in which it probably interacts with several non-PTS permeases and inhibits their transport activity. The protein is Phosphocarrier protein HPr (ptsH) of Lacticaseibacillus casei (Lactobacillus casei).